Here is a 730-residue protein sequence, read N- to C-terminus: Pheromone-processing carboxypeptidase KEX1 (730 aa).

Residues 1-19 form the signal peptide; that stretch reads MLHATVLPILLWLATLAYG. The Lumenal segment spans residues 20-599; that stretch reads FDRKEFLVDG…DEDEEGSNFK (580 aa). An N-linked (GlcNAc...) asparagine glycan is attached at asparagine 60. Active-site residues include serine 181, aspartate 376, and histidine 441. The segment at 475–590 is disordered; that stretch reads SSKDGDIDGY…LETGGEYYQD (116 aa). The span at 486–497 shows a compositional bias: basic and acidic residues; that stretch reads EDDKSQDENKDN. 2 N-linked (GlcNAc...) asparagine glycosylation sites follow: asparagine 497 and asparagine 507. The span at 498-514 shows a compositional bias: acidic residues; it reads ESEDESEDENDSDDESD. Residues 515–526 show a composition bias toward basic and acidic residues; it reads GKEGDKQENKPD. 2 stretches are compositionally biased toward acidic residues: residues 527–557 and 579–590; these read DSDD…DGDD and NDLETGGEYYQD. A helical membrane pass occupies residues 600–620; sequence AFFLILSLVSAFIIVAAFYIS. Topologically, residues 621–730 are cytoplasmic; it reads DYIKSRRHPI…DIELQDIERH (110 aa). A disordered region spans residues 684–730; that stretch reads EDEEQLEGVVPESTRKSKKGSKKKGKYFSVPNDDSAEDIELQDIERH. The span at 699–709 shows a compositional bias: basic residues; the sequence is KSKKGSKKKGK. Over residues 717–730 the composition is skewed to acidic residues; the sequence is DSAEDIELQDIERH.

It belongs to the peptidase S10 family.

It localises to the golgi apparatus. It is found in the trans-Golgi network membrane. The enzyme catalyses Preferential release of a C-terminal arginine or lysine residue.. Its function is as follows. Protease with a carboxypeptidase B-like function involved in the C-terminal processing of the lysine and arginine residues from protein precursors. Promotes cell fusion and is involved in the programmed cell death. The polypeptide is Pheromone-processing carboxypeptidase KEX1 (KEX1) (Candida glabrata (strain ATCC 2001 / BCRC 20586 / JCM 3761 / NBRC 0622 / NRRL Y-65 / CBS 138) (Yeast)).